A 290-amino-acid polypeptide reads, in one-letter code: MSELRFFTSTTEVQANHILDLLSLEFGEEDYAIATTEVDEKRDIWETSIYLMFDEEDDILARVNAALVTEFPDLPVEREVIPDIDWIAKSLEGLTPVRAGRFLVHGSHDRDKVRPHDLAIEIDAGQAFGTGHHGTTAGCLEMIDSVVRARRPRNALDLGTGSGVLAIAVRKLVNVPVLATDIDPIAVRVAKENGTRNGVPNGIEWRTAPGFHSTAFGEFGPFDLIIANILARPLMKMAPQLVTHLAPGGSVILSGILASQRWKVIAAYNGAGVKHVRTIWRNGWVTIHLQ.

The S-adenosyl-L-methionine site is built by Thr-136, Gly-159, Asp-181, and Asn-228.

The protein belongs to the methyltransferase superfamily. PrmA family.

It localises to the cytoplasm. It carries out the reaction L-lysyl-[protein] + 3 S-adenosyl-L-methionine = N(6),N(6),N(6)-trimethyl-L-lysyl-[protein] + 3 S-adenosyl-L-homocysteine + 3 H(+). Functionally, methylates ribosomal protein L11. In Allorhizobium ampelinum (strain ATCC BAA-846 / DSM 112012 / S4) (Agrobacterium vitis (strain S4)), this protein is Ribosomal protein L11 methyltransferase.